Consider the following 288-residue polypeptide: UDP-3-O-acyl-N-acetylglucosamine deacetylase (288 aa).

His79, His236, and Asp240 together coordinate Zn(2+). Catalysis depends on His263, which acts as the Proton donor.

The protein belongs to the LpxC family. Zn(2+) is required as a cofactor.

The catalysed reaction is a UDP-3-O-[(3R)-3-hydroxyacyl]-N-acetyl-alpha-D-glucosamine + H2O = a UDP-3-O-[(3R)-3-hydroxyacyl]-alpha-D-glucosamine + acetate. It participates in glycolipid biosynthesis; lipid IV(A) biosynthesis; lipid IV(A) from (3R)-3-hydroxytetradecanoyl-[acyl-carrier-protein] and UDP-N-acetyl-alpha-D-glucosamine: step 2/6. In terms of biological role, catalyzes the hydrolysis of UDP-3-O-myristoyl-N-acetylglucosamine to form UDP-3-O-myristoylglucosamine and acetate, the committed step in lipid A biosynthesis. This chain is UDP-3-O-acyl-N-acetylglucosamine deacetylase, found in Rickettsia prowazekii (strain Madrid E).